A 31-amino-acid polypeptide reads, in one-letter code: Cytochrome b6-f complex subunit 6 (31 aa).

The helical transmembrane segment at 4–24 (ITSYFGFLLVALTITSALFIG) threads the bilayer.

Belongs to the PetL family. The 4 large subunits of the cytochrome b6-f complex are cytochrome b6, subunit IV (17 kDa polypeptide, PetD), cytochrome f and the Rieske protein, while the 4 small subunits are PetG, PetL, PetM and PetN. The complex functions as a dimer.

It is found in the plastid. Its subcellular location is the chloroplast thylakoid membrane. In terms of biological role, component of the cytochrome b6-f complex, which mediates electron transfer between photosystem II (PSII) and photosystem I (PSI), cyclic electron flow around PSI, and state transitions. PetL is important for photoautotrophic growth as well as for electron transfer efficiency and stability of the cytochrome b6-f complex. The protein is Cytochrome b6-f complex subunit 6 of Pelargonium hortorum (Common geranium).